Here is a 488-residue protein sequence, read N- to C-terminus: Envelope glycoprotein gp62 (488 aa).

The signal sequence occupies residues 1 to 20 (MGKFLATLILFFQFCPLILS). At 21–442 (DYSPSCCTLT…LGLSQWAREA (422 aa)) the chain is on the extracellular side. 2 N-linked (GlcNAc...) asparagine; by host glycosylation sites follow: N140 and N222. A CXXC motif is present at residues 225–228 (CIVC). 3 cysteine pairs are disulfide-bonded: C225–C228, C225–C401, and C393–C400. N244 and N272 each carry an N-linked (GlcNAc...) asparagine; by host glycan. The interval 313-333 (AVPVAVWLVSALAMGAGMAGG) is fusion peptide. 2 coiled-coil regions span residues 341 to 387 (ASGR…LLFW) and 397 to 429 (QEQC…GWGL). Residues 376–392 (AQNRRGLDLLFWEQGGL) form an immunosuppression region. Positions 393 to 401 (CKALQEQCC) match the CX6CC motif. An N-linked (GlcNAc...) asparagine; by host glycan is attached at N404. A helical transmembrane segment spans residues 443-463 (LQTGITLVALLLLVILAGPCI). A lipid anchor (S-palmitoyl cysteine; by host) is attached at C462. Topologically, residues 464–488 (LRQLRHLPSRVRYPHYSLINPESSL) are cytoplasmic.

As to quaternary structure, the mature envelope protein (Env) consists of a trimer of SU-TM heterodimers attached by a labile interchain disulfide bond. In terms of processing, specific enzymatic cleavages in vivo yield mature proteins. Envelope glycoproteins are synthesized as an inactive precursor that is N-glycosylated and processed likely by host cell furin or by a furin-like protease in the Golgi to yield the mature SU and TM proteins. The cleavage site between SU and TM requires the minimal sequence [KR]-X-[KR]-R. Post-translationally, the CXXC motif is highly conserved across a broad range of retroviral envelope proteins. It is thought to participate in the formation of a labile disulfide bond possibly with the CX6CC motif present in the transmembrane protein. Isomerization of the intersubunit disulfide bond to an SU intrachain disulfide bond is thought to occur upon receptor recognition in order to allow membrane fusion. The transmembrane protein is palmitoylated.

The protein resides in the virion membrane. Its subcellular location is the host cell membrane. Functionally, the surface protein (SU) attaches the virus to the host cell by binding to its receptor. This interaction triggers the refolding of the transmembrane protein (TM) and is thought to activate its fusogenic potential by unmasking its fusion peptide. Fusion occurs at the host cell plasma membrane. In terms of biological role, the transmembrane protein (TM) acts as a class I viral fusion protein. Under the current model, the protein has at least 3 conformational states: pre-fusion native state, pre-hairpin intermediate state, and post-fusion hairpin state. During viral and target cell membrane fusion, the coiled coil regions (heptad repeats) assume a trimer-of-hairpins structure, positioning the fusion peptide in close proximity to the C-terminal region of the ectodomain. The formation of this structure appears to drive apposition and subsequent fusion of viral and target cell membranes. Membranes fusion leads to delivery of the nucleocapsid into the cytoplasm. The protein is Envelope glycoprotein gp62 (env) of Human T-cell leukemia virus 1 (isolate Zaire EL subtype B) (HTLV-1).